Reading from the N-terminus, the 484-residue chain is Probable peptide/nitrate transporter At3g43790 (484 aa).

12 helical membrane-spanning segments follow: residues Phe-39–Tyr-59, Phe-76–Trp-96, Pro-107–Thr-127, Phe-129–Ile-149, Val-168–Ala-188, Phe-210–Leu-230, Met-278–Phe-298, Val-318–Pro-338, Val-355–Leu-375, Cys-381–Leu-401, Ile-416–Phe-436, and Val-460–Ile-480.

The protein belongs to the major facilitator superfamily.

It is found in the membrane. The polypeptide is Probable peptide/nitrate transporter At3g43790 (ZIFL2) (Arabidopsis thaliana (Mouse-ear cress)).